The sequence spans 833 residues: Interleukin enhancer-binding factor 3 homolog (833 aa).

Residues 11-379 (RIFVNDDRHV…PMKRPIEEES (369 aa)) form the DZF domain. 2 disordered regions span residues 65–86 (VNALDTDGEGDKETEPSTGEQA) and 339–403 (DPLP…KAEP). Thr70 bears the Phosphothreonine mark. A compositionally biased stretch (basic and acidic residues) spans 373-385 (RPIEEESTDEKNP). DRBM domains lie at 402–471 (EPAQ…DMGL) and 527–593 (HGKN…KLFP). Disordered stretches follow at residues 597-651 (NSEV…FNQG), 702-762 (QSDS…GGGA), and 775-833 (AYPS…YQYR). Positions 629–639 (GRGRGRGRGRG) are enriched in basic residues. Positions 640-651 (RGFNNGGGFNQG) are enriched in gly residues. Residues 775-818 (AYPSQVTGGQEYNYEGYSNQSNYNSQGGANQNFGGNSAPYNSGQ) are compositionally biased toward polar residues.

It is found in the nucleus. It localises to the nucleolus. The protein resides in the cytoplasm. Functionally, RNA-binding protein that plays an essential role in the biogenesis of circular RNAs (circRNAs) which are produced by back-splicing circularization of pre-mRNAs. Within the nucleus, promotes circRNAs processing by stabilizing the regulatory elements residing in the flanking introns of the circularized exons. Plays thereby a role in the back-splicing of a subset of circRNAs. As a consequence, participates in a wide range of transcriptional and post-transcriptional processes. Binds to poly-U elements and AU-rich elements (AREs) in the 3'-UTR of target mRNAs. Upon viral infection, ILF3 accumulates in the cytoplasm and participates in the innate antiviral response. Mechanistically, ILF3 becomes phosphorylated and activated by the double-stranded RNA-activated protein kinase/PKR which releases ILF3 from cellular mature circRNAs. In turn, unbound ILF3 molecules are able to interact with and thus inhibit viral mRNAs. The sequence is that of Interleukin enhancer-binding factor 3 homolog (ilf3) from Danio rerio (Zebrafish).